The primary structure comprises 329 residues: Phenylalanine--tRNA ligase alpha subunit (329 aa).

Glu-254 provides a ligand contact to Mg(2+).

It belongs to the class-II aminoacyl-tRNA synthetase family. Phe-tRNA synthetase alpha subunit type 1 subfamily. As to quaternary structure, tetramer of two alpha and two beta subunits. Requires Mg(2+) as cofactor.

It localises to the cytoplasm. It carries out the reaction tRNA(Phe) + L-phenylalanine + ATP = L-phenylalanyl-tRNA(Phe) + AMP + diphosphate + H(+). The sequence is that of Phenylalanine--tRNA ligase alpha subunit (pheS) from Haemophilus influenzae (strain ATCC 51907 / DSM 11121 / KW20 / Rd).